The following is a 219-amino-acid chain: Uracil-DNA glycosylase (219 aa).

Catalysis depends on aspartate 61, which acts as the Proton acceptor.

It belongs to the uracil-DNA glycosylase (UDG) superfamily. UNG family.

It localises to the cytoplasm. It catalyses the reaction Hydrolyzes single-stranded DNA or mismatched double-stranded DNA and polynucleotides, releasing free uracil.. Functionally, excises uracil residues from the DNA which can arise as a result of misincorporation of dUMP residues by DNA polymerase or due to deamination of cytosine. In Exiguobacterium sibiricum (strain DSM 17290 / CCUG 55495 / CIP 109462 / JCM 13490 / 255-15), this protein is Uracil-DNA glycosylase.